The chain runs to 103 residues: Histone H4 (103 aa).

The segment covering 1–14 (MSGRGKGGKGLGKG) has biased composition (gly residues). The interval 1–20 (MSGRGKGGKGLGKGGAKRHR) is disordered. The residue at position 6 (K6) is an N6-acetyl-N6-methyllysine; alternate. K6, K9, and K13 each carry N6-methyllysine; alternate. At K13 the chain carries N6-acetyl-N6-methyllysine; alternate. Residues 17 to 21 (KRHRK) mediate DNA binding. K92 carries the post-translational modification N6-glutaryllysine.

It belongs to the histone H4 family. As to quaternary structure, the nucleosome is a histone octamer containing two molecules each of H2A, H2B, H3 and H4 assembled in one H3-H4 heterotetramer and two H2A-H2B heterodimers. The octamer wraps approximately 147 bp of DNA. Glutarylation at Lys-92 (H4K91glu) destabilizes nucleosomes by promoting dissociation of the H2A-H2B dimers from nucleosomes.

It is found in the nucleus. The protein localises to the chromosome. Core component of nucleosome. Nucleosomes wrap and compact DNA into chromatin, limiting DNA accessibility to the cellular machineries which require DNA as a template. Histones thereby play a central role in transcription regulation, DNA repair, DNA replication and chromosomal stability. DNA accessibility is regulated via a complex set of post-translational modifications of histones, also called histone code, and nucleosome remodeling. The sequence is that of Histone H4 (HHF1) from Mycosarcoma maydis (Corn smut fungus).